The chain runs to 45 residues: Parabutoporin (45 aa).

Monomer and homodimer. In terms of tissue distribution, expressed by the venom gland.

The protein resides in the secreted. It is found in the target cell membrane. In terms of biological role, at high concentrations, acts as a pore former in cellular membranes and causes the leakage of the cells. At submicromolar concentrations, degranulates granulocytes and has a weak hemolytic activity against human red blood cells. Also strongly inhibits the production of superoxide anions. Has a strong antibacterial activity against Gram-negative bacteria but is less active against Gram-positive bacteria. Also has antifungal activity. Induces reversible G-protein dependent Ca(2+) release from intracellular stores and increase Ca(2+) influx in HL-60 cells. Induces the activation of the Rac pathway in granulocytes. Synergistically enhances the excitatory effects of short and long chain ion-channel-specific neurotoxins by interaction with the neuronal membranes. The protein is Parabutoporin of Parabuthus schlechteri (Scorpion).